We begin with the raw amino-acid sequence, 342 residues long: MKVEKSSKGLEVLVRTQEDDLEGFSFLEIMDRVDPLPLDFENYKNFKEGIYYMCTHDGTKIGFVLKFAINEMETVCSEIFEETFQLDESRHELRFKSEDFDHRNNLIDQLARKMYLESSLSGVKGWRNEKYAVWVNKKPYVLVERAVAGVLGIITYGIHINGYVLDPKSKKVQFWVPRRSKTKQTWPLMLDNIIAGGLGYPYGIYETVLKESMEEANLEKSVIEDNIKATGSVSYLYFTGDISVTKFNKESDFIVGEVQYVYDLKLSEDIIPKPNDGEVESFNLFSLQETINALRKKEFKPNCALVMVDFLIRHGYITPENEPNYLELVTRMHRRLPFPTLN.

Residues 155 to 309 (TYGIHINGYV…KPNCALVMVD (155 aa)) enclose the Nudix hydrolase domain.

This is an uncharacterized protein from Saccharomyces cerevisiae (strain ATCC 204508 / S288c) (Baker's yeast).